Reading from the N-terminus, the 314-residue chain is Homoserine kinase (314 aa).

95–105 serves as a coordination point for ATP; that stretch reads PHSRGLGSSAA.

It belongs to the GHMP kinase family. Homoserine kinase subfamily.

It localises to the cytoplasm. It carries out the reaction L-homoserine + ATP = O-phospho-L-homoserine + ADP + H(+). It participates in amino-acid biosynthesis; L-threonine biosynthesis; L-threonine from L-aspartate: step 4/5. In terms of biological role, catalyzes the ATP-dependent phosphorylation of L-homoserine to L-homoserine phosphate. The polypeptide is Homoserine kinase (Mycolicibacterium vanbaalenii (strain DSM 7251 / JCM 13017 / BCRC 16820 / KCTC 9966 / NRRL B-24157 / PYR-1) (Mycobacterium vanbaalenii)).